A 474-amino-acid polypeptide reads, in one-letter code: Histone H2B.v2 (474 aa).

3 disordered regions span residues 99–123, 276–295, and 328–394; these read FNNGGNNNNNNEQDNDLQEKEQNEL, TTFTQQEQQEQFNDDKISGD, and FNDN…VNNN. 3 stretches are compositionally biased toward low complexity: residues 100-110, 276-286, and 329-368; these read NNGGNNNNNNE, TTFTQQEQQEQ, and NDNNNNNNNNNNNNNNNNNNNNNNININNDNDNNNNNNKN.

The protein belongs to the histone H2B family.

The sequence is that of Histone H2B.v2 (H2Bv2) from Dictyostelium discoideum (Social amoeba).